Here is a 200-residue protein sequence, read N- to C-terminus: Glycerol-3-phosphate acyltransferase (200 aa).

The next 5 membrane-spanning stretches (helical) occupy residues 2-22, 51-71, 84-104, 113-133, and 143-163; these read IHLL…AVIV, TAAI…VVAA, IVLL…FFGF, ALGI…ATWV, and SLSA…LLGW.

Belongs to the PlsY family. In terms of assembly, probably interacts with PlsX.

It localises to the cell inner membrane. The enzyme catalyses an acyl phosphate + sn-glycerol 3-phosphate = a 1-acyl-sn-glycero-3-phosphate + phosphate. It participates in lipid metabolism; phospholipid metabolism. Functionally, catalyzes the transfer of an acyl group from acyl-phosphate (acyl-PO(4)) to glycerol-3-phosphate (G3P) to form lysophosphatidic acid (LPA). This enzyme utilizes acyl-phosphate as fatty acyl donor, but not acyl-CoA or acyl-ACP. This Thiobacillus denitrificans (strain ATCC 25259 / T1) protein is Glycerol-3-phosphate acyltransferase.